We begin with the raw amino-acid sequence, 284 residues long: Serine/arginine-rich splicing factor RS2Z32 (284 aa).

The RRM domain occupies 11-81 (TRLYVGRLSS…SRITVEASRG (71 aa)). The tract at residues 74–97 (ITVEASRGAPRGSRDNGSRGPPPG) is disordered. 2 CCHC-type zinc fingers span residues 99-116 (GRCFNCGVDGHWARDCTA) and 121-138 (NKCYRCGERGHIERNCKN). The segment at 132–284 (IERNCKNSPS…RPSPKGSESP (153 aa)) is disordered. Residues 159–180 (RSPRRRRSPSRSRSYSRGRSYS) show a composition bias toward basic residues. Phosphoserine is present on residues serine 166, serine 168, and serine 184. Residues 186 to 203 (VRREKSVEDRSRSPKAME) show a composition bias toward basic and acidic residues. A phosphoserine mark is found at serine 205, serine 207, serine 214, serine 216, serine 225, serine 235, serine 255, serine 265, serine 277, and serine 281. Residues 209 to 236 (KGRDQSLSPDRKVIDASPKRGSDYDGSP) are compositionally biased toward basic and acidic residues.

It belongs to the splicing factor SR family. RS2Z subfamily. Component of the spliceosome. Post-translationally, extensively phosphorylated on serine residues in the RS domain.

The protein resides in the nucleus. Functionally, probably involved in intron recognition and spliceosome assembly. This chain is Serine/arginine-rich splicing factor RS2Z32 (RS2Z32), found in Arabidopsis thaliana (Mouse-ear cress).